The chain runs to 276 residues: Large ribosomal subunit protein uL2 (276 aa).

Disordered regions lie at residues 1–61 (MALK…HKQK) and 224–276 (AMNP…KKKN). A compositionally biased stretch (basic and acidic residues) spans 15-31 (GRIDLRKDEITAQKPEK).

The protein belongs to the universal ribosomal protein uL2 family. In terms of assembly, part of the 50S ribosomal subunit. Forms a bridge to the 30S subunit in the 70S ribosome.

Functionally, one of the primary rRNA binding proteins. Required for association of the 30S and 50S subunits to form the 70S ribosome, for tRNA binding and peptide bond formation. It has been suggested to have peptidyltransferase activity; this is somewhat controversial. Makes several contacts with the 16S rRNA in the 70S ribosome. This chain is Large ribosomal subunit protein uL2, found in Treponema denticola (strain ATCC 35405 / DSM 14222 / CIP 103919 / JCM 8153 / KCTC 15104).